The chain runs to 205 residues: Metal-independent carbonic anhydrase (205 aa).

Residues 1 to 24 (MNLFKPRILVLFAATALISGIAIV) form the signal peptide. Residues threonine 106 and tyrosine 124 each contribute to the hydrogencarbonate site.

Belongs to the iota-class carbonic anhydrase family. As to quaternary structure, homotetramer; dimer of dimers. The cofactor is Does not require a metal cofactor..

It carries out the reaction hydrogencarbonate + H(+) = CO2 + H2O. With respect to regulation, activity is not affected by EDTA or 2,6-pyridinedicarboxylic acid (PDA). Activity is not affected by addition of most divalent metal ions, except zinc ions which decrease the activity. Inhibited by the iodide ion. Catalyzes the hydration of carbon dioxide (CO2) to bicarbonate (HCO3(-)). Has only very low bicarbonate dehydration activity. May function even in metal-poor environments. This chain is Metal-independent carbonic anhydrase, found in Nostoc sp. (strain PCC 7120 / SAG 25.82 / UTEX 2576).